A 307-amino-acid chain; its full sequence is Cuticle collagen 36 (307 aa).

Disordered regions lie at residues 76–102 (TRSR…GGPT) and 116–307 (QQGP…PPGY). Residues 86–102 (EGSGSGGSGSGGYGGPT) show a composition bias toward gly residues. 6 triple-helical region regions span residues 89–105 (GSGG…TGAG), 118–150 (GPAG…EGSI), 167–187 (GPQG…KGKS), 194–226 (GKNG…PGRV), 231–257 (GAAG…AGLT), and 260–295 (GGQG…EGSC). The segment covering 157–168 (PSEPCIICPPGP) has biased composition (pro residues). A compositionally biased stretch (basic and acidic residues) spans 186 to 196 (KSQERAADGKN). A compositionally biased stretch (pro residues) spans 202–220 (IGPPGPPGGVGEPGPPGPA). A compositionally biased stretch (low complexity) spans 231–242 (GAAGPAGPRGVK). The span at 258–278 (EIGGQGPPGDAGGPGPVGGQG) shows a compositional bias: gly residues. Positions 279–288 (PPGPQGPQGP) are enriched in pro residues.

It belongs to the cuticular collagen family. In terms of assembly, collagen polypeptide chains are complexed within the cuticle by disulfide bonds and other types of covalent cross-links.

Functionally, nematode cuticles are composed largely of collagen-like proteins. The cuticle functions both as an exoskeleton and as a barrier to protect the worm from its environment. The protein is Cuticle collagen 36 (col-36) of Caenorhabditis elegans.